A 364-amino-acid polypeptide reads, in one-letter code: Fructose-bisphosphate aldolase B (364 aa).

Ala2 bears the N-acetylalanine mark. Lys13 is modified (N6-succinyllysine). Ser36 carries the post-translational modification Phosphoserine. At Thr39 the chain carries Phosphothreonine. Arg43 serves as a coordination point for beta-D-fructose 1,6-bisphosphate. Ser89 carries the post-translational modification Phosphoserine. Thr119 is modified (phosphothreonine). Lys121 carries the N6-succinyllysine modification. Ser132 carries the phosphoserine modification. The active-site Proton acceptor is Glu188. The Schiff-base intermediate with dihydroxyacetone-P role is filled by Lys230. Ser272, Ser276, Ser299, and Ser301 each carry phosphoserine. Residue Ser272–Gly274 participates in beta-D-fructose 1,6-bisphosphate binding. Arg304 contacts beta-D-fructose 1,6-bisphosphate. At Ser309 the chain carries Phosphoserine. The residue at position 317 (Lys317) is an N6-succinyllysine.

Belongs to the class I fructose-bisphosphate aldolase family. In terms of assembly, homotetramer. Interacts with BBS1, BBS2, BBS4 and BBS7. Forms a ternary complex with G6PD and TP53; this interaction is direct.

The protein localises to the cytoplasm. Its subcellular location is the cytosol. The protein resides in the cytoskeleton. It is found in the microtubule organizing center. It localises to the centrosome. The protein localises to the centriolar satellite. The catalysed reaction is beta-D-fructose 1,6-bisphosphate = D-glyceraldehyde 3-phosphate + dihydroxyacetone phosphate. It catalyses the reaction beta-D-fructose 1-phosphate = D-glyceraldehyde + dihydroxyacetone phosphate. The protein operates within carbohydrate degradation; glycolysis; D-glyceraldehyde 3-phosphate and glycerone phosphate from D-glucose: step 4/4. It participates in carbohydrate biosynthesis; gluconeogenesis. Its pathway is carbohydrate metabolism; fructose metabolism. Catalyzes the aldol cleavage of fructose 1,6-biphosphate to form two triosephosphates dihydroxyacetone phosphate and D-glyceraldehyde 3-phosphate in glycolysis as well as the reverse stereospecific aldol addition reaction in gluconeogenesis. In fructolysis, metabolizes fructose 1-phosphate derived from the phosphorylation of dietary fructose by fructokinase into dihydroxyacetone phosphate and D-glyceraldehyde. Acts as an adapter independently of its enzymatic activity, exerts a tumor suppressor role by stabilizing the ternary complex with G6PD and TP53 to inhibit G6PD activity and keep oxidative pentose phosphate metabolism in check. This is Fructose-bisphosphate aldolase B (ALDOB) from Pongo abelii (Sumatran orangutan).